Reading from the N-terminus, the 458-residue chain is Argininosuccinate lyase (458 aa).

This sequence belongs to the lyase 1 family. Argininosuccinate lyase subfamily.

The protein resides in the cytoplasm. The catalysed reaction is 2-(N(omega)-L-arginino)succinate = fumarate + L-arginine. It functions in the pathway amino-acid biosynthesis; L-arginine biosynthesis; L-arginine from L-ornithine and carbamoyl phosphate: step 3/3. This chain is Argininosuccinate lyase, found in Geobacter metallireducens (strain ATCC 53774 / DSM 7210 / GS-15).